The sequence spans 511 residues: 4,4'-diapophytoene desaturase (4,4'-diapolycopene-forming) (511 aa).

This sequence belongs to the carotenoid/retinoid oxidoreductase family.

The catalysed reaction is 15-cis-4,4'-diapophytoene + 4 FAD + 4 H(+) = all-trans-4,4'-diapolycopene + 4 FADH2. The protein operates within carotenoid biosynthesis. Functionally, involved in the biosynthesis of C30 carotenoids. Catalyzes four successive dehydrogenation reactions that lead to the introduction of four double bonds into 4,4'-diapophytoene (dehydrosqualene) to yield 4,4'-diapolycopene. This is 4,4'-diapophytoene desaturase (4,4'-diapolycopene-forming) from Methylomonas sp.